The chain runs to 406 residues: Phosphopentomutase (406 aa).

Positions 10, 305, 310, 346, 347, and 358 each coordinate Mn(2+).

It belongs to the phosphopentomutase family. Mn(2+) serves as cofactor.

The protein localises to the cytoplasm. The enzyme catalyses 2-deoxy-alpha-D-ribose 1-phosphate = 2-deoxy-D-ribose 5-phosphate. The catalysed reaction is alpha-D-ribose 1-phosphate = D-ribose 5-phosphate. It functions in the pathway carbohydrate degradation; 2-deoxy-D-ribose 1-phosphate degradation; D-glyceraldehyde 3-phosphate and acetaldehyde from 2-deoxy-alpha-D-ribose 1-phosphate: step 1/2. Functionally, isomerase that catalyzes the conversion of deoxy-ribose 1-phosphate (dRib-1-P) and ribose 1-phosphate (Rib-1-P) to deoxy-ribose 5-phosphate (dRib-5-P) and ribose 5-phosphate (Rib-5-P), respectively. This Vibrio cholerae serotype O1 (strain ATCC 39541 / Classical Ogawa 395 / O395) protein is Phosphopentomutase.